Reading from the N-terminus, the 428-residue chain is Mitochondrial import inner membrane translocase subunit TIM50-C (428 aa).

The chain crosses the membrane as a helical span at residues 59-79; sequence LFTCTALPAAAPALFSILHTA. Residues 80–428 are Mitochondrial intermembrane-facing; it reads RGYSSTTKQE…KQWSRNILGR (349 aa). A disordered region spans residues 112-138; that stretch reads FPQTSPEVDSNAEQERKKREEEEEKEN. Basic and acidic residues predominate over residues 124–138; it reads EQERKKREEEEEKEN. The FCP1 homology domain occupies 224 to 367; that stretch reads YVQPRYTLVL…LDLIAFLKII (144 aa).

It belongs to the TIM50 family. As to quaternary structure, component of the TIM23 complex at least composed of Tim23, Tim17 (Tim17a1, Tim17a2 or Tim17b1) and a Tim50.

The protein localises to the mitochondrion inner membrane. In terms of biological role, essential component of the TIM23 complex, a complex that mediates the translocation of transit peptide-containing proteins across the mitochondrial inner membrane. The sequence is that of Mitochondrial import inner membrane translocase subunit TIM50-C (ttm50) from Drosophila melanogaster (Fruit fly).